A 224-amino-acid chain; its full sequence is MIKIENLTKSYRTPTGRHYVFKDLNIEIPSGKSVAFIGRNGAGKSTLLRMIGGIDRPDSGKIITNKTISWPVGLAGGFQGSLTGRENVKFVARLYAKQEELKEKIEFVEEFAELGKYFDMPIKTYSSGMRSRLGFGLSMAFKFDYYIVDEVTAVGDARFKEKCAQLFKERHKESSFLMVSHSLNSLKEFCDVAIVFKNSYIIGYYENVQSGIDEYKMYQDLDIE.

One can recognise an ABC transporter domain in the interval 2–223 (IKIENLTKSY…EYKMYQDLDI (222 aa)). An ATP-binding site is contributed by 38 to 45 (GRNGAGKS).

It belongs to the ABC transporter superfamily.

It is found in the cell inner membrane. Putative ATP-binding protein, and an energy coupling component for the transport of polysialic acid across the cytoplasmic membrane. In Escherichia coli, this protein is Polysialic acid transport ATP-binding protein KpsT (kpsT).